We begin with the raw amino-acid sequence, 219 residues long: Response regulator ArlR (219 aa).

The Response regulatory domain occupies 3–116 (NILIVEDEQN…ELLARIRAVL (114 aa)). 4-aspartylphosphate is present on aspartate 52. A DNA-binding region (ompR/PhoB-type) is located at residues 122 to 219 (KDVLDINGII…TVRGVGYVIR (98 aa)).

Phosphorylated by ArlS.

The protein resides in the cytoplasm. Member of the two-component regulatory system ArlS/ArlR. This chain is Response regulator ArlR (arlR), found in Staphylococcus epidermidis (strain ATCC 12228 / FDA PCI 1200).